The sequence spans 862 residues: Solute carrier family 4 member 11 (862 aa).

The Cytoplasmic segment spans residues 1–343 (MSQNEHCQDS…IIGKSKSVGK (343 aa)). Residues 344-366 (YVTTTLFLYFACLLPTIAFGSLN) form a helical membrane-spanning segment. The Extracellular segment spans residues 367 to 379 (DENTNGAIDVQKT). A helical transmembrane segment spans residues 380 to 393 (IAGQSIGGLLYALF). At 394–398 (SGQPL) the chain is on the cytoplasmic side. Residues 399–415 (VILLTTAPLAIYTQVIR) form a helical membrane-spanning segment. The Extracellular segment spans residues 416 to 428 (VICDDYNLDFNAF). The chain crosses the membrane as a helical span at residues 429–452 (YAWTGLWNSFFLALYAFLNLSLLM). The Cytoplasmic segment spans residues 453 to 460 (NLFKRSTE). A helical transmembrane segment spans residues 461 to 481 (EIIALFISITFVLDAVKGMVK). Topologically, residues 482 to 542 (IFGKYYYGHH…SSPGSTHSGQ (61 aa)) are extracellular. N-linked (GlcNAc...) asparagine glycosylation is found at Asn511 and Asn519. The chain crosses the membrane as a helical span at residues 543–564 (ATAVLSLLIMLGTLWLGYTLYQ). Topologically, residues 565–577 (FKKSPYLHPCVRE) are cytoplasmic. Residues 578–599 (TLSDCALPIAVLSFSLIGSYGF) traverse the membrane as a helical segment. Topologically, residues 600–627 (QEIEMSKFRYNPSESLFEVAQIHSLSFK) are extracellular. A helical membrane pass occupies residues 628–645 (AIGSAMGLGFLLSLLFFI). Residues 646 to 670 (EQNLVAALVNAPENRLVKGTAYHWD) lie on the Cytoplasmic side of the membrane. A helical membrane pass occupies residues 671–691 (LLLLAIINTGLSLFGLPWIHA). Residues 692-721 (AYPHSPLHVRALALVEERVENGHIYETIVD) lie on the Extracellular side of the membrane. The chain crosses the membrane as a helical span at residues 722–746 (VKETRLTALGASVLVGLSLLLLPFP). Residues 747–752 (LQWIPK) lie on the Cytoplasmic side of the membrane. The helical transmembrane segment at 753–770 (PVLYGLFLYIALTSLDGN) threads the bilayer. Over 771-774 (QLFS) the chain is Extracellular. Residues 775-797 (RVALLLKEQTSYPPTHYIRRVPQ) form a helical membrane-spanning segment. The Cytoplasmic segment spans residues 798-802 (RKIHY). Residues 803 to 819 (FTGLQILQLLLLCAFGM) form a helical membrane-spanning segment. Topologically, residues 820–823 (SSLP) are extracellular. A helical membrane pass occupies residues 824-844 (YMKMVFPLIMIAMIPIRYNLL). Residues 845-862 (PRIIEAKYLDVMDAEHRP) are Cytoplasmic-facing.

This sequence belongs to the anion exchanger (TC 2.A.31) family. In terms of assembly, homodimer. Post-translationally, glycosylated. As to expression, expressed in the endothelial cells of the cornea. In the inner ear, is located in fibrocytes underlying the stria vascularis. In the kidney, is expressed in the thin descending limb of Henle loop.

Its subcellular location is the cell membrane. The protein resides in the basolateral cell membrane. It carries out the reaction tetrahydroxoborate(in) + 2 Na(+)(in) = tetrahydroxoborate(out) + 2 Na(+)(out). Multifunctional transporter with an impact in cell morphology and differentiation. In the presence of borate B(OH)4(-), acts as a voltage-dependent electrogenic Na(+)-coupled B(OH)4(-) cotransporter controlling boron homeostasis. At early stages of stem cell differentiation, participates in synergy with ITGA5-ITGB1 and ITGAV-ITGB3 integrins and BMPR1A to promote cell adhesion and contractility that drives differentiation toward osteogenic commitment while inhibiting adipogenesis. In the absence of B(OH)4(-), acts as a Na(+)-coupled OH(-) or H(+) permeable channel with implications in cellular redox balance. Regulates the oxidative stress response in corneal endothelium by enhancing antioxidant defenses and protecting cells from reactive oxygen species. In response to hypo-osmotic challenge, also acts as water permeable channel at the basolateral cell membrane of corneal endothelial cells and facilitates transendothelial fluid reabsorption in the aqueous humor. In the presence of ammonia, acts as an electrogenic NH3/H(+) cotransporter and may play a role in ammonia transport and reabsorption in renal Henle's loop epithelium. The polypeptide is Solute carrier family 4 member 11 (Slc4a11) (Mus musculus (Mouse)).